Consider the following 314-residue polypeptide: tRNA pseudouridine synthase B (314 aa).

Asp41 (nucleophile) is an active-site residue.

It belongs to the pseudouridine synthase TruB family. Type 1 subfamily.

The catalysed reaction is uridine(55) in tRNA = pseudouridine(55) in tRNA. Its function is as follows. Responsible for synthesis of pseudouridine from uracil-55 in the psi GC loop of transfer RNAs. This chain is tRNA pseudouridine synthase B, found in Prochlorococcus marinus (strain NATL2A).